We begin with the raw amino-acid sequence, 290 residues long: MPSLKEVKTKITGVKKTSQITKAMNMVAASRLRGAQDKMESFRPYASKFSEAMSNLSGGGNTNAFPLMDVRDVKTVELIVVTSDRGLCGSFNANVVKLTEKKMAQYRAEGKKVSLICIGKKGYQLLRKSGAVRENYSDIMAHFSINNAREIASDVADNFLKGTADKVEIIYGAFKSVAVQAPVAEDLLPIQPVVSSEPAGEQTMSGDYIYEPSSEEIMDAMQPLYLNVLVYHAMLEVGASEHAARMTAMDNATTACRDIVSNLTIVYNKARQAAVTNELMDIVGGAEALK.

It belongs to the ATPase gamma chain family. As to quaternary structure, F-type ATPases have 2 components, CF(1) - the catalytic core - and CF(0) - the membrane proton channel. CF(1) has five subunits: alpha(3), beta(3), gamma(1), delta(1), epsilon(1). CF(0) has three main subunits: a, b and c.

Its subcellular location is the cell inner membrane. Its function is as follows. Produces ATP from ADP in the presence of a proton gradient across the membrane. The gamma chain is believed to be important in regulating ATPase activity and the flow of protons through the CF(0) complex. The polypeptide is ATP synthase gamma chain (Desulfotalea psychrophila (strain LSv54 / DSM 12343)).